The chain runs to 194 residues: Outer-membrane lipoprotein LolB (194 aa).

The N-terminal stretch at 1 to 18 (MKLLQHLTLIFCLLILTA) is a signal peptide. Cys-19 carries N-palmitoyl cysteine lipidation. Cys-19 is lipidated: S-diacylglycerol cysteine.

This sequence belongs to the LolB family. As to quaternary structure, monomer.

It localises to the cell outer membrane. Functionally, plays a critical role in the incorporation of lipoproteins in the outer membrane after they are released by the LolA protein. The sequence is that of Outer-membrane lipoprotein LolB from Tolumonas auensis (strain DSM 9187 / NBRC 110442 / TA 4).